Reading from the N-terminus, the 226-residue chain is Large ribosomal subunit protein uL1 (226 aa).

Belongs to the universal ribosomal protein uL1 family. As to quaternary structure, part of the 50S ribosomal subunit.

In terms of biological role, binds directly to 23S rRNA. The L1 stalk is quite mobile in the ribosome, and is involved in E site tRNA release. Its function is as follows. Protein L1 is also a translational repressor protein, it controls the translation of the L11 operon by binding to its mRNA. The polypeptide is Large ribosomal subunit protein uL1 (Mycoplasmoides gallisepticum (strain R(low / passage 15 / clone 2)) (Mycoplasma gallisepticum)).